The primary structure comprises 605 residues: Pyruvate decarboxylase 1 (605 aa).

Substrate-binding residues include Asp-67 and His-154. The thiamine pyrophosphate binding stretch occupies residues 432 to 514 (DSWFNCQKLR…FLINNGGYTI (83 aa)). The Mg(2+) site is built by Asp-482, Asn-509, and Gly-511. Residue Glu-515 coordinates substrate.

The protein belongs to the TPP enzyme family. Homotetramer. The cofactor is a metal cation. Thiamine diphosphate is required as a cofactor.

It carries out the reaction a 2-oxocarboxylate + H(+) = an aldehyde + CO2. This Oryza sativa subsp. japonica (Rice) protein is Pyruvate decarboxylase 1 (PDC1).